Here is a 240-residue protein sequence, read N- to C-terminus: UPF0502 protein Veis_2102 (240 aa).

This sequence belongs to the UPF0502 family.

This Verminephrobacter eiseniae (strain EF01-2) protein is UPF0502 protein Veis_2102.